The chain runs to 266 residues: MTRRADPAQATLFDDDEPAGAPTATGGFVPLADQFDALPADWKALLGPCLARTDWPALCAFVDGERAAGKPIFPTEVFHALHLTPVDAVRVIILGQDPYHGTGTVDGREVPQAHGLAFSVPAGVRVPPSLRNIYKEIEAEYGRKLSAGSGNLEGWAQQGVLLLNTVLTVEQGQAASHARRGWERITDCLLEHLARVGHARVFMLWGSHAQAKRALLPEGHLVLEAPHPSPLSAHRGFLGCGHFRAANDWLAAQGQSTIDWLRPQAD.

The interval 1-25 is disordered; the sequence is MTRRADPAQATLFDDDEPAGAPTAT. The active-site Proton acceptor is the Asp-97.

Belongs to the uracil-DNA glycosylase (UDG) superfamily. UNG family.

It localises to the cytoplasm. The enzyme catalyses Hydrolyzes single-stranded DNA or mismatched double-stranded DNA and polynucleotides, releasing free uracil.. Its function is as follows. Excises uracil residues from the DNA which can arise as a result of misincorporation of dUMP residues by DNA polymerase or due to deamination of cytosine. This chain is Uracil-DNA glycosylase, found in Ralstonia nicotianae (strain ATCC BAA-1114 / GMI1000) (Ralstonia solanacearum).